The following is a 218-amino-acid chain: Protein-L-isoaspartate O-methyltransferase (218 aa).

Residue S66 is part of the active site.

Belongs to the methyltransferase superfamily. L-isoaspartyl/D-aspartyl protein methyltransferase family.

The protein resides in the cytoplasm. It carries out the reaction [protein]-L-isoaspartate + S-adenosyl-L-methionine = [protein]-L-isoaspartate alpha-methyl ester + S-adenosyl-L-homocysteine. Its function is as follows. Catalyzes the methyl esterification of L-isoaspartyl residues in peptides and proteins that result from spontaneous decomposition of normal L-aspartyl and L-asparaginyl residues. It plays a role in the repair and/or degradation of damaged proteins. This Caulobacter sp. (strain K31) protein is Protein-L-isoaspartate O-methyltransferase.